The chain runs to 65 residues: Beta-mammal toxin Tpa2 (65 aa).

The LCN-type CS-alpha/beta domain occupies 2-64 (KEGYLVGNDG…TWSRATNRCG (63 aa)). Cystine bridges form between Cys12–Cys63, Cys16–Cys38, Cys24–Cys44, and Cys28–Cys46.

Expressed by the venom gland.

The protein localises to the secreted. Its function is as follows. Beta toxins bind voltage-independently at site-4 of sodium channels (Nav) and shift the voltage of activation toward more negative potentials thereby affecting sodium channel activation and promoting spontaneous and repetitive firing. This toxin is lethal to mice. The protein is Beta-mammal toxin Tpa2 of Tityus pachyurus (Colombian scorpion).